A 217-amino-acid polypeptide reads, in one-letter code: tRNA (guanine-N(7)-)-methyltransferase (217 aa).

4 residues coordinate S-adenosyl-L-methionine: glutamate 44, glutamate 69, aspartate 96, and aspartate 118. Aspartate 118 is a catalytic residue. Substrate-binding positions include lysine 122, aspartate 154, and 191 to 194 (TEYE).

It belongs to the class I-like SAM-binding methyltransferase superfamily. TrmB family.

The enzyme catalyses guanosine(46) in tRNA + S-adenosyl-L-methionine = N(7)-methylguanosine(46) in tRNA + S-adenosyl-L-homocysteine. Its pathway is tRNA modification; N(7)-methylguanine-tRNA biosynthesis. In terms of biological role, catalyzes the formation of N(7)-methylguanine at position 46 (m7G46) in tRNA. This Bacillus thuringiensis (strain Al Hakam) protein is tRNA (guanine-N(7)-)-methyltransferase.